Consider the following 374-residue polypeptide: Queuine tRNA-ribosyltransferase (374 aa).

The Proton acceptor role is filled by Asp-89. Residues 89–93, Asp-143, Gln-187, and Gly-214 each bind substrate; that span reads DSGGF. The tract at residues 245–251 is RNA binding; that stretch reads GVGKPED. Catalysis depends on Asp-264, which acts as the Nucleophile. Residues 269–273 are RNA binding; important for wobble base 34 recognition; sequence TRNAR. Zn(2+) contacts are provided by Cys-302, Cys-304, Cys-307, and His-333.

The protein belongs to the queuine tRNA-ribosyltransferase family. As to quaternary structure, homodimer. Within each dimer, one monomer is responsible for RNA recognition and catalysis, while the other monomer binds to the replacement base PreQ1. Zn(2+) serves as cofactor.

It catalyses the reaction 7-aminomethyl-7-carbaguanine + guanosine(34) in tRNA = 7-aminomethyl-7-carbaguanosine(34) in tRNA + guanine. It functions in the pathway tRNA modification; tRNA-queuosine biosynthesis. Catalyzes the base-exchange of a guanine (G) residue with the queuine precursor 7-aminomethyl-7-deazaguanine (PreQ1) at position 34 (anticodon wobble position) in tRNAs with GU(N) anticodons (tRNA-Asp, -Asn, -His and -Tyr). Catalysis occurs through a double-displacement mechanism. The nucleophile active site attacks the C1' of nucleotide 34 to detach the guanine base from the RNA, forming a covalent enzyme-RNA intermediate. The proton acceptor active site deprotonates the incoming PreQ1, allowing a nucleophilic attack on the C1' of the ribose to form the product. After dissociation, two additional enzymatic reactions on the tRNA convert PreQ1 to queuine (Q), resulting in the hypermodified nucleoside queuosine (7-(((4,5-cis-dihydroxy-2-cyclopenten-1-yl)amino)methyl)-7-deazaguanosine). This Shewanella sp. (strain W3-18-1) protein is Queuine tRNA-ribosyltransferase.